The sequence spans 378 residues: Putative glutamate--cysteine ligase 2 (378 aa).

The protein belongs to the glutamate--cysteine ligase type 2 family. YbdK subfamily.

It catalyses the reaction L-cysteine + L-glutamate + ATP = gamma-L-glutamyl-L-cysteine + ADP + phosphate + H(+). In terms of biological role, ATP-dependent carboxylate-amine ligase which exhibits weak glutamate--cysteine ligase activity. The sequence is that of Putative glutamate--cysteine ligase 2 from Salinispora arenicola (strain CNS-205).